Here is a 240-residue protein sequence, read N- to C-terminus: HTH-type transcriptional repressor STM4068 (240 aa).

Residues 9–77 (TPLYKQLFFI…RGSGSVVCSV (69 aa)) form the HTH gntR-type domain. Residues 37–56 (QKEIARSYNVSLIVVKQAWS) constitute a DNA-binding region (H-T-H motif).

In terms of biological role, represses the expression of the STM4065-STM4067 operon. This Salmonella typhimurium (strain LT2 / SGSC1412 / ATCC 700720) protein is HTH-type transcriptional repressor STM4068.